The chain runs to 81 residues: EC protein III (81 aa).

This sequence belongs to the metallothionein superfamily. Type 15 family.

Its function is as follows. Binds 5 molecules of zinc. May have a role in Zn(2+) homeostasis during embryogenesis. The sequence is that of EC protein III from Triticum aestivum (Wheat).